A 457-amino-acid chain; its full sequence is Siroheme synthase (457 aa).

A precorrin-2 dehydrogenase /sirohydrochlorin ferrochelatase region spans residues 1–204 (MDHLPIFCQL…NDQKAITETT (204 aa)). NAD(+) contacts are provided by residues 22-23 (DV) and 43-44 (LA). Phosphoserine is present on serine 128. Residues 216-457 (GEVVLVGAGP…RDKLNWFSNH (242 aa)) are uroporphyrinogen-III C-methyltransferase. Proline 225 provides a ligand contact to S-adenosyl-L-methionine. Aspartate 248 functions as the Proton acceptor in the catalytic mechanism. Catalysis depends on lysine 270, which acts as the Proton donor. Residues 301-303 (GGD), isoleucine 306, 331-332 (TA), methionine 382, and glycine 411 each bind S-adenosyl-L-methionine.

This sequence in the N-terminal section; belongs to the precorrin-2 dehydrogenase / sirohydrochlorin ferrochelatase family. The protein in the C-terminal section; belongs to the precorrin methyltransferase family.

It carries out the reaction uroporphyrinogen III + 2 S-adenosyl-L-methionine = precorrin-2 + 2 S-adenosyl-L-homocysteine + H(+). It catalyses the reaction precorrin-2 + NAD(+) = sirohydrochlorin + NADH + 2 H(+). The enzyme catalyses siroheme + 2 H(+) = sirohydrochlorin + Fe(2+). Its pathway is cofactor biosynthesis; adenosylcobalamin biosynthesis; precorrin-2 from uroporphyrinogen III: step 1/1. It participates in cofactor biosynthesis; adenosylcobalamin biosynthesis; sirohydrochlorin from precorrin-2: step 1/1. The protein operates within porphyrin-containing compound metabolism; siroheme biosynthesis; precorrin-2 from uroporphyrinogen III: step 1/1. It functions in the pathway porphyrin-containing compound metabolism; siroheme biosynthesis; siroheme from sirohydrochlorin: step 1/1. Its pathway is porphyrin-containing compound metabolism; siroheme biosynthesis; sirohydrochlorin from precorrin-2: step 1/1. In terms of biological role, multifunctional enzyme that catalyzes the SAM-dependent methylations of uroporphyrinogen III at position C-2 and C-7 to form precorrin-2 via precorrin-1. Then it catalyzes the NAD-dependent ring dehydrogenation of precorrin-2 to yield sirohydrochlorin. Finally, it catalyzes the ferrochelation of sirohydrochlorin to yield siroheme. The polypeptide is Siroheme synthase (Escherichia coli O6:K15:H31 (strain 536 / UPEC)).